The primary structure comprises 344 residues: Transcription factor HHO3 (344 aa).

Disordered regions lie at residues 90–122 and 156–212; these read KWSSASSDETDKDEEAEKTEMMTNENNDGDKKK and AFQP…KQRR. The span at 97 to 106 shows a compositional bias: acidic residues; that stretch reads DETDKDEEAE. Residues 178–188 show a composition bias toward low complexity; the sequence is TPTSTTTTSST. The region spanning 206-266 is the HTH myb-type domain; the sequence is SNRKQRRCWS…HLQKYRLHTR (61 aa). Positions 237-262 form a DNA-binding region, H-T-H motif; it reads PKQIRDLMKVDGLTNDEVKSHLQKYR. The disordered stretch occupies residues 306–344; that stretch reads PVATQPPQSSTSGERSNRGCKSPATSSTTTHTPHLLPLS. Polar residues predominate over residues 310 to 319; sequence QPPQSSTSGE. Positions 330–344 are enriched in low complexity; it reads TSSTTTHTPHLLPLS.

The protein localises to the nucleus. Probable transcription factor involved in phosphate signaling in roots. The protein is Transcription factor HHO3 of Arabidopsis thaliana (Mouse-ear cress).